We begin with the raw amino-acid sequence, 378 residues long: B3 domain-containing protein Os03g0622200 (378 aa).

A DNA-binding region (TF-B3 1) is located at residues 29–124 (SKHFLKHMVG…SFDVLIFDPS (96 aa)). The tract at residues 140-159 (GRAENSAGAEQGGRNGRRTP) is disordered. The segment at residues 256-370 (FVQVIHSSHV…TMTVHVLRRV (115 aa)) is a DNA-binding region (TF-B3 2).

Its subcellular location is the nucleus. This chain is B3 domain-containing protein Os03g0622200, found in Oryza sativa subsp. japonica (Rice).